We begin with the raw amino-acid sequence, 163 residues long: Glutathione peroxidase-like peroxiredoxin HYR1 (163 aa).

Cys36 serves as the catalytic Cysteine sulfenic acid (-SOH) intermediate. A disulfide bond links Cys36 and Cys82.

This sequence belongs to the glutathione peroxidase family. Interacts with YAP1 and probably YBP1.

The protein resides in the cytoplasm. It localises to the mitochondrion intermembrane space. It is found in the peroxisome matrix. It catalyses the reaction a hydroperoxide + [thioredoxin]-dithiol = an alcohol + [thioredoxin]-disulfide + H2O. Its function is as follows. Involved in oxidative stress response and redox homeostasis. Functions as a sensor and transducer of hydroperoxide stress. In response to hydroperoxide stress it oxidizes (activates) the transcription activator YAP1, which is involved in transcription activation of genes of the oxidative stress response pathway. May also play a direct role in hydroperoxide scavenging, being the most active of three closely related S.cerevisiae peroxiredoxins (GPX1, GPX2, and HYR1/GPX3) with respect to peroxide and lipid hydroperoxide reduction. The three enzymes are not required for the glutaredoxin-mediated antioxidant function. In the presence of peroxides, HYR1/GPX3 is directly oxidized at Cys-36 to form a cysteine sulfenic acid (-SOH). Cys-36-SOH then forms either an intramolecular disulfide bond (Cys-36 with Cys-82) or a transient, intermolecular disulfide bond with 'Cys-598' of YAP1, which is further resolved into a YAP1 intramolecular disulfide bond ('Cys-303' with 'Cys-598'), which causes its nuclear accumulation and activation, and a reduced Cys-36 in HYR1/GPX3. This Saccharomyces cerevisiae (strain ATCC 204508 / S288c) (Baker's yeast) protein is Glutathione peroxidase-like peroxiredoxin HYR1.